We begin with the raw amino-acid sequence, 171 residues long: Adenine phosphoribosyltransferase (171 aa).

It belongs to the purine/pyrimidine phosphoribosyltransferase family. As to quaternary structure, homodimer.

The protein resides in the cytoplasm. The catalysed reaction is AMP + diphosphate = 5-phospho-alpha-D-ribose 1-diphosphate + adenine. Its pathway is purine metabolism; AMP biosynthesis via salvage pathway; AMP from adenine: step 1/1. Its function is as follows. Catalyzes a salvage reaction resulting in the formation of AMP, that is energically less costly than de novo synthesis. This Pelotomaculum thermopropionicum (strain DSM 13744 / JCM 10971 / SI) protein is Adenine phosphoribosyltransferase.